The sequence spans 139 residues: Small ribosomal subunit protein uS9 (139 aa).

It belongs to the universal ribosomal protein uS9 family.

The chain is Small ribosomal subunit protein uS9 from Coxiella burnetii (strain CbuG_Q212) (Coxiella burnetii (strain Q212)).